Reading from the N-terminus, the 858-residue chain is Leucine--tRNA ligase (858 aa).

A 'HIGH' region motif is present at residues Pro-42–His-52. Residues Lys-618–Ser-622 carry the 'KMSKS' region motif. Lys-621 is an ATP binding site.

It belongs to the class-I aminoacyl-tRNA synthetase family.

The protein localises to the cytoplasm. The catalysed reaction is tRNA(Leu) + L-leucine + ATP = L-leucyl-tRNA(Leu) + AMP + diphosphate. This chain is Leucine--tRNA ligase, found in Aliivibrio salmonicida (strain LFI1238) (Vibrio salmonicida (strain LFI1238)).